The chain runs to 217 residues: Regulator of G-protein signaling 19 (217 aa).

The tract at residues 1-29 (MPTPHEAEKQITGPEEADRPPSMSSHDTA) is disordered. Phosphoserine occurs at positions 24 and 97. In terms of domain architecture, RGS spans 90–206 (SFDKLMHSPA…LSSPTYRALL (117 aa)). Position 151 is a phosphoserine; by MAPK1 and MAPK3 (Ser151). Positions 207–217 (LQGPSQSSSEA) are interaction with GIPC.

Interacts with GIPC PDZ domain. Interacts with GNAO1. Fatty acylated. Heavily palmitoylated in the cysteine string motif. Post-translationally, phosphorylated, mainly on serine residues. Highest expression in lung. Placenta, liver and heart also express high levels of GAIP.

The protein localises to the membrane. Inhibits signal transduction by increasing the GTPase activity of G protein alpha subunits thereby driving them into their inactive GDP-bound form. Binds to G-alpha subfamily 1 members, with the order G(i)a3 &gt; G(i)a1 &gt; G(o)a &gt;&gt; G(z)a/G(i)a2. Activity on G(z)-alpha is inhibited by phosphorylation and palmitoylation of the G-protein. The sequence is that of Regulator of G-protein signaling 19 (RGS19) from Homo sapiens (Human).